We begin with the raw amino-acid sequence, 83 residues long: Small ribosomal subunit protein eS21 (83 aa).

This sequence belongs to the eukaryotic ribosomal protein eS21 family. In terms of assembly, component of the 40S small ribosomal subunit. Interacts with sta.

The protein localises to the cytoplasm. Its subcellular location is the cytosol. It is found in the rough endoplasmic reticulum. In terms of biological role, may be an associated component of the ribosome rather than a core structural subunit. May act as a translation initiation factor. Has a role in regulation of cell proliferation in the hematopoietic organs and the imaginal disks of larva. In Drosophila erecta (Fruit fly), this protein is Small ribosomal subunit protein eS21 (RpS21).